A 702-amino-acid chain; its full sequence is Phosphoribosylformylglycinamidine synthase subunit PurL (702 aa).

His36 is an active-site residue. Residues Tyr39 and Lys80 each contribute to the ATP site. Position 82 (Glu82) interacts with Mg(2+). Residues 83 to 86 (SHNH) and Arg105 contribute to the substrate site. The active-site Proton acceptor is His84. Asp106 contacts Mg(2+). Residue Gln225 coordinates substrate. Asp251 is a binding site for Mg(2+). 293 to 295 (ETQ) contributes to the substrate binding site. 2 residues coordinate ATP: Asp468 and Gly505. Ser508 serves as a coordination point for substrate.

Belongs to the FGAMS family. Monomer. Part of the FGAM synthase complex composed of 1 PurL, 1 PurQ and 2 PurS subunits.

The protein localises to the cytoplasm. It carries out the reaction N(2)-formyl-N(1)-(5-phospho-beta-D-ribosyl)glycinamide + L-glutamine + ATP + H2O = 2-formamido-N(1)-(5-O-phospho-beta-D-ribosyl)acetamidine + L-glutamate + ADP + phosphate + H(+). It functions in the pathway purine metabolism; IMP biosynthesis via de novo pathway; 5-amino-1-(5-phospho-D-ribosyl)imidazole from N(2)-formyl-N(1)-(5-phospho-D-ribosyl)glycinamide: step 1/2. Its function is as follows. Part of the phosphoribosylformylglycinamidine synthase complex involved in the purines biosynthetic pathway. Catalyzes the ATP-dependent conversion of formylglycinamide ribonucleotide (FGAR) and glutamine to yield formylglycinamidine ribonucleotide (FGAM) and glutamate. The FGAM synthase complex is composed of three subunits. PurQ produces an ammonia molecule by converting glutamine to glutamate. PurL transfers the ammonia molecule to FGAR to form FGAM in an ATP-dependent manner. PurS interacts with PurQ and PurL and is thought to assist in the transfer of the ammonia molecule from PurQ to PurL. This is Phosphoribosylformylglycinamidine synthase subunit PurL from Metallosphaera sedula (strain ATCC 51363 / DSM 5348 / JCM 9185 / NBRC 15509 / TH2).